Reading from the N-terminus, the 302-residue chain is MADELEFIEQGLQRSQIDEFFAEELARAGYGGMELAPTPMGMQIVLKAEKPGMVIGKGGKNIRKITTQLEERFDLEDPQIDVQEVEEPDLNAQIVADRLANALERGWYFRKAGHTTIDRIMESGALGAEIVLSGKVTGNRGRVEKFNRGYIKHNGEPAEEIVDHGKGVAVMKLGTIGVNVKIIPPNAELPDDFEIQEDADIEDLVVDEAEAGEDLEELLEGEDADAEDADADAAAEPESEPADFEDEEVIETDDDVEEELDELADAVEGEDEDDEFSDVDDEAADTAEDLLDEMDDEDGGAE.

The KH type-2 domain maps to 17–86 (IDEFFAEELA…DPQIDVQEVE (70 aa)). The interval 222–302 (EDADAEDADA…EMDDEDGGAE (81 aa)) is disordered.

It belongs to the universal ribosomal protein uS3 family. In terms of assembly, part of the 30S ribosomal subunit.

Functionally, binds the lower part of the 30S subunit head. The polypeptide is Small ribosomal subunit protein uS3 (Halobacterium salinarum (strain ATCC 700922 / JCM 11081 / NRC-1) (Halobacterium halobium)).